The following is a 777-amino-acid chain: Santalene and bergamotene synthase, chloroplastic (777 aa).

The N-terminal 36 residues, 1 to 36, are a transit peptide targeting the chloroplast; that stretch reads MIVGYRSTIITLSHPKLGNGKTISSNAIFQRSCRVR. Mg(2+)-binding residues include aspartate 530 and aspartate 534. Positions 530-534 match the DDXXD motif motif; sequence DDQFD.

It belongs to the terpene synthase family. Tpse subfamily. Mg(2+) serves as cofactor. Mn(2+) is required as a cofactor.

It is found in the plastid. The protein localises to the chloroplast. It carries out the reaction (2Z,6Z)-farnesyl diphosphate = (+)-alpha-santalene + diphosphate. It catalyses the reaction (2Z,6Z)-farnesyl diphosphate = (+)-endo-beta-bergamotene + diphosphate. The enzyme catalyses (2Z,6Z)-farnesyl diphosphate = (1S,5S,6S)-alpha-bergamotene + diphosphate. In terms of biological role, (2Z,6Z)-farnesyl diphosphate cyclizing enzyme. Produces (+)-alpha-santalene, (+)-endo-beta-bergamotene, (-)-endo-alpha-bergamotene, and at lower amounts, (-)exo-alpha-bergamotene and (+)-epi-beta-santalene. Not able to use geranyl diphosphate, E,E-farnesyl diphosphate or E,E,E-geranylgeranyl diphosphate as substrates, but able to use Neryl diphosphate to make the monoterpene terpineol. This is Santalene and bergamotene synthase, chloroplastic (SBS) from Solanum habrochaites (Wild tomato).